The chain runs to 516 residues: Probable rhamnogalacturonase B (516 aa).

Positions methionine 1–alanine 21 are cleaved as a signal peptide. Cysteine 42 and cysteine 68 are oxidised to a cystine. A glycan (N-linked (GlcNAc...) asparagine) is linked at asparagine 145. The active-site Proton donor is the aspartate 219. Cysteine 221 and cysteine 238 are oxidised to a cystine. N-linked (GlcNAc...) asparagine glycosylation is present at asparagine 239. The active site involves histidine 294. N-linked (GlcNAc...) asparagine glycosylation occurs at asparagine 321. 2 disulfide bridges follow: cysteine 344/cysteine 350 and cysteine 372/cysteine 381. Residues glutamate 462–alanine 516 form a disordered region. Positions arginine 469–alanine 485 are enriched in polar residues. The segment covering proline 502–alanine 516 has biased composition (basic residues).

This sequence belongs to the glycosyl hydrolase 28 family.

Its subcellular location is the secreted. The catalysed reaction is Endohydrolysis of alpha-D-GalA-(1-&gt;2)-alpha-L-Rha glycosidic bond in the rhamnogalacturonan I backbone with initial inversion of anomeric configuration releasing oligosaccharides with beta-D-GalA at the reducing end.. Its function is as follows. Pectinolytic enzymes consist of four classes of enzymes: pectine lyase, polygalacturonase, pectin methylesterase and rhamnogalacturonase. Hydrolyzes alpha-D-galacturonopyranosyl-(1,2)-alpha-L-rhamnopyranosyl linkages in the backbone of the hairy regions of pectins. This is Probable rhamnogalacturonase B (rhgB) from Neosartorya fischeri (strain ATCC 1020 / DSM 3700 / CBS 544.65 / FGSC A1164 / JCM 1740 / NRRL 181 / WB 181) (Aspergillus fischerianus).